A 1777-amino-acid chain; its full sequence is MVQRKDPPSEQLRAYTLLIELLSYQFAFPVRWIETQNDLIQRNNTIQRFVEVGPSNVLANMAKKTAKGQYAEEDLVRCVDRQYLSHADDAQHIYYQYDEEAPVESADNEPAQPAASSTPAAPAPVAAPPVVVQTAPQPAAQAAVAVPDVDLSAIDVVISIVAQKIRKAFDEVPAAKSIRDLSAGKSTLQNELIGQLDAEFRGLPEGSEDLALEALASHFTNFSGRPGKVMGGHIDRLVAARMPAGFNQAKIRDYLSSHWGLGLNRQTTVLCYAVTMEPAARLADAGQATQFLDSVVSRYGGKAGIALQKRAEGGASQTSAVAQVDLASLETLKKEQNEYLHKQFQLLAKHLDLDGVAQPSQTQVQGEDTDRLAEWDAEFDEEFLTGMRTIFDPRKARRYDSWWNTAREDLMALLHDIRPAAEDKASQRYQSLVNRWSPELEQMLEHSAQDDTTKEKAQMLLDDVRASGVANGPVFRYTQPAMAPETKVDANGRIQYSEVPRRQLHGENKASTLNYAQVVAARHRDVPYAHLRSRAGVDWKYDDQLTDMFLNILSTGASTGLSFTGRRVLVTGAGVGSIGADIVAGLLAGGAHVIVTTSRQPSDVAASFRQLYAKVGAPGSELIVLPFNQASKRDCEELINHIYDEQSGYGWDLDFIIPFAAISEIGRQIDKIDSKSELAHRAMLVNLLRLLGFIKQQKEKRGFDCRPTGVLLPLSPNHGNFGGDGLYSESKLGLETLFNRFHSEGWSDFLCIIGAVIGWTRGTGLMSANNIVAQGMEDSLDILTFSAPEMAFNILSLLSGDILEVADDEPIYADLSGGLQGVSDLKDKISAIRKKIVSDSRIRQALVAENLHEQKVLRGTKPAEGNVQPPLKRRSNIEPAFPPLSDYNSVTAGLQSLKGMVDLSRTVVVVGYSELGPWGSSRTRWEMEHEGRLSLEGYTELAWMMGLIKHFDGDLKGKPYTGWVDSKTKEAVDEADIEEKYGQHILGHAGIRVIEPELSEGYDPSQKEIMHEVVIDEDLPPFEAPQGVAQAFKLRHGDKVILTPIEGSESVKVVVKSGAVFMVPKAMAFNRFVAGQLPSGWDPTRYGIPEDIVAQVDPMTVYVLCCVSEAMYSAGLEDPFELYRHIHVSELANCVGTGAGGLLAMRGVYRDRYLDRPVQSDILQESFLNAMNAWTNMLLMGAAGPIKSPSGTCATSVESMDIACEAIQTLKAKVAIVGGSDDFQEEMSYEFGNMKATANAEDELEKGYLPSEMSRPTASSRSGFVESAGCGIQLVMSAELALQMGLPIYGIVAYSQMAGDKVGRSVPAPGQGVLTAARESIDAAQSPLLDVQYRKARLDEAVSEIKRWRHKESQKLIASTTSKEFKDLDAHLQHINNIAATRIRDAQWTWNNNIRHIDPTIAPMRAALATWGLSVDDIQVASFHGTSTKANDKNESNVINQQMTHLSRTVGNPLLVICQKSLTGHPKGAAGAWMFNGCLQALQTGIVPGNRNADNVDVALQQFKHLVYPSQTIHTSGIKAFMLTSFGFGQKGGLVVGIAPRYLFSTITANKFEDYRERVLQRQQKIIPVFQRRMAQGRLFQIKDQSAWTSDQEKDVFLNPQARVAQKSTGEYSFPTTVAPVASSLPARTVSDDKQLFARSSDQWLRDSISKEQGNVSVGVDIESISSVNIEDEIFLERNFTPGELKYCQGSPDKQASLSGRWAAKEAIFKSLQIPSEGAGAAMRDIEIVSNGAQPPTVLLHNRAKSAADAQKVEEVQVSITHSPESAMAIALARRRL.

The segment at 101–124 (APVESADNEPAQPAASSTPAAPAP) is disordered. Residues 110–120 (PAQPAASSTPA) show a composition bias toward low complexity. The Carrier domain maps to 151 to 237 (LSAIDVVISI…KVMGGHIDRL (87 aa)). At Ser186 the chain carries O-(pantetheine 4'-phosphoryl)serine. A ketoreductase (KR) domain region spans residues 563–803 (FTGRRVLVTG…ILSLLSGDIL (241 aa)). A Ketosynthase family 3 (KS3) domain is found at 1007 to 1539 (KEIMHEVVID…QKGGLVVGIA (533 aa)). Catalysis depends on for beta-ketoacyl synthase activity residues Cys1193, His1424, and His1465. Asp1661 is a binding site for Mg(2+). Acetyl-CoA is bound by residues 1661 to 1663 (DIE), 1706 to 1716 (EAIFKSLQIPS), 1730 to 1734 (SNGAQ), and 1760 to 1762 (ITH).

This sequence belongs to the thiolase-like superfamily. Fungal fatty acid synthetase subunit alpha family. In terms of assembly, fatty acid synthase is composed of alpha and beta subunits.

It catalyses the reaction acetyl-CoA + n malonyl-CoA + 2n NADPH + 4n H(+) = a long-chain-acyl-CoA + n CoA + n CO2 + 2n NADP(+).. The enzyme catalyses a fatty acyl-[ACP] + malonyl-[ACP] + H(+) = a 3-oxoacyl-[ACP] + holo-[ACP] + CO2. It carries out the reaction a (3R)-hydroxyacyl-[ACP] + NADP(+) = a 3-oxoacyl-[ACP] + NADPH + H(+). It participates in secondary metabolite biosynthesis. Functionally, fatty acid synthase alpha subunit; part of the gene cluster that mediates the biosynthesis of oryzines, natural products with an unusual maleidride backbone. The two subunits of the fungal fatty acid synthase oryfasA and oryfasB probably form octenoic acid. This fatty acid is most likely activated by the acyl-CoA ligase oryP to give octenyl-CoA before the citrate synthase-like protein oryE catalyzes condensation with oxaloacetate to form tricarboxylic acid. The next steps of the pathways are conjectural, but a favorite possible route has been proposed, beginning with decarboxylation and concomitant dehydration by the decarboxylase oryM, followed by tautomerization, which may lead to the production of a diene intermediate. Reduction of this diene intermediate could give the known metabolite piliformic acid. On the pathway to oryzine B and oryzine A, however, hydroxylation of the diene by the alpha-ketoglutarate-dependent dioxygenase oryG and lactonisation by the lactonohydrolases oryH or oryL could give oryzine B directly. Finally, enoyl reduction by the dehydrogenase oryD would then convert oryzine B into oryzine A. This Aspergillus oryzae (strain ATCC 42149 / RIB 40) (Yellow koji mold) protein is Fatty acid synthase subunit alpha.